The following is a 312-amino-acid chain: Aspartoacylase (312 aa).

Residues His-20 and Glu-23 each coordinate Zn(2+). N-acetyl-L-aspartate is bound by residues Arg-62, Asn-69, and Arg-70. His-115 contributes to the Zn(2+) binding site. Positions 163 and 167 each coordinate N-acetyl-L-aspartate. The active-site Proton donor/acceptor is Glu-177. Tyr-287 serves as a coordination point for N-acetyl-L-aspartate.

Belongs to the AspA/AstE family. Aspartoacylase subfamily. In terms of assembly, homodimer. The cofactor is Zn(2+).

It is found in the cytoplasm. It localises to the nucleus. The enzyme catalyses an N-acyl-L-aspartate + H2O = a carboxylate + L-aspartate. The catalysed reaction is N-acetyl-L-aspartate + H2O = L-aspartate + acetate. Functionally, catalyzes the deacetylation of N-acetylaspartic acid (NAA) to produce acetate and L-aspartate. NAA occurs in high concentration in brain and its hydrolysis NAA plays a significant part in the maintenance of intact white matter. In other tissues it acts as a scavenger of NAA from body fluids. The chain is Aspartoacylase from Mus musculus (Mouse).